The following is a 462-amino-acid chain: Cytochrome P450 20A1 (462 aa).

The helical transmembrane segment at 4-24 (FAIFAVTFLLALVGAVLYLYP) threads the bilayer. C409 lines the heme pocket.

The protein belongs to the cytochrome P450 family. It depends on heme as a cofactor.

It is found in the membrane. This is Cytochrome P450 20A1 (CYP20A1) from Homo sapiens (Human).